The chain runs to 809 residues: Chorion peroxidase (809 aa).

Positions 1-21 are cleaved as a signal peptide; the sequence is MSRILFILLLLIVTQLSELQA. A propeptide spanning residues 22–223 is cleaved from the precursor; sequence AAFSVRQNRF…KFTETPLAHH (202 aa). Residues 36 to 55 are disordered; that stretch reads DLQTPAPLATSTESSKKPEK. N110 carries an N-linked (GlcNAc...) asparagine glycan. C224 carries the post-translational modification N-acetylcysteine; in Chorion peroxidase light chain. C230 and C244 are joined by a disulfide. H320 (proton acceptor) is an active-site residue. C448 and C457 are disulfide-bonded. H568 is a binding site for heme b. Residues C765 and C794 are joined by a disulfide bond.

The protein belongs to the peroxidase family. XPO subfamily. In terms of assembly, heterodimer. Requires heme b as cofactor. As to expression, expressed at low levels in the germarium and early follicles. Expression becomes progressively stronger during vitellogenesis, and is highly expressed in germ cells and somatic cells. A subset of follicle cells, termed border cells (BC), exhibit a high level of expression.

It localises to the secreted. The enzyme catalyses 2 a phenolic donor + H2O2 = 2 a phenolic radical donor + 2 H2O. Functionally, required for ovarian follicle maturation. Involved in the formation of a rigid and insoluble egg chorion by catalyzing chorion protein cross-linking through dityrosine formation and phenol oxidase-catalyzed chorion melanization. The chain is Chorion peroxidase (Pxt) from Drosophila melanogaster (Fruit fly).